Consider the following 1578-residue polypeptide: Pentafunctional AROM polypeptide (1578 aa).

Residues 1-384 (MTGPTKISIL…YEPRASVVPN (384 aa)) form a 3-dehydroquinate synthase region. NAD(+)-binding positions include 44 to 46 (DTN), 81 to 84 (EVSK), 114 to 116 (GGV), and aspartate 119. Arginine 130 serves as a coordination point for 7-phospho-2-dehydro-3-deoxy-D-arabino-heptonate. An NAD(+)-binding site is contributed by 139–140 (TT). 7-phospho-2-dehydro-3-deoxy-D-arabino-heptonate-binding residues include aspartate 146 and lysine 152. Residue lysine 161 coordinates NAD(+). Asparagine 162 is a 7-phospho-2-dehydro-3-deoxy-D-arabino-heptonate binding site. NAD(+) is bound by residues 179 to 182 (FLET) and asparagine 190. Glutamate 194 is a Zn(2+) binding site. 7-phospho-2-dehydro-3-deoxy-D-arabino-heptonate contacts are provided by residues 194 to 197 (EVIK) and lysine 250. Residue glutamate 260 is the Proton acceptor; for 3-dehydroquinate synthase activity of the active site. 7-phospho-2-dehydro-3-deoxy-D-arabino-heptonate is bound by residues 264-268 (RNLLN) and histidine 271. Residue histidine 271 participates in Zn(2+) binding. Histidine 275 functions as the Proton acceptor; for 3-dehydroquinate synthase activity in the catalytic mechanism. 7-phospho-2-dehydro-3-deoxy-D-arabino-heptonate contacts are provided by histidine 287 and lysine 356. Histidine 287 lines the Zn(2+) pocket. The interval 397–842 (VYPGVSPASE…WDTLRQKFAV (446 aa)) is EPSP synthase. The active-site For EPSP synthase activity is cysteine 824. Residues 864-1055 (SASVFIIGMR…KKKQHSFFVS (192 aa)) form a shikimate kinase region. 871-878 (GMRGAGKT) contacts ATP. A 3-dehydroquinase region spans residues 1056–1276 (LTLPDVRGAD…AAPGQLSATD (221 aa)). Histidine 1179 functions as the Proton acceptor; for 3-dehydroquinate dehydratase activity in the catalytic mechanism. Catalysis depends on lysine 1207, which acts as the Schiff-base intermediate with substrate; for 3-dehydroquinate dehydratase activity. Positions 1289–1578 (KKRFALFGSP…YERARAIVLG (290 aa)) are shikimate dehydrogenase.

In the N-terminal section; belongs to the sugar phosphate cyclases superfamily. Dehydroquinate synthase family. This sequence in the 2nd section; belongs to the EPSP synthase family. The protein in the 3rd section; belongs to the shikimate kinase family. It in the 4th section; belongs to the type-I 3-dehydroquinase family. In the C-terminal section; belongs to the shikimate dehydrogenase family. Homodimer. The cofactor is Zn(2+).

The protein localises to the cytoplasm. The catalysed reaction is 7-phospho-2-dehydro-3-deoxy-D-arabino-heptonate = 3-dehydroquinate + phosphate. It catalyses the reaction 3-dehydroquinate = 3-dehydroshikimate + H2O. The enzyme catalyses shikimate + NADP(+) = 3-dehydroshikimate + NADPH + H(+). It carries out the reaction shikimate + ATP = 3-phosphoshikimate + ADP + H(+). The catalysed reaction is 3-phosphoshikimate + phosphoenolpyruvate = 5-O-(1-carboxyvinyl)-3-phosphoshikimate + phosphate. It participates in metabolic intermediate biosynthesis; chorismate biosynthesis; chorismate from D-erythrose 4-phosphate and phosphoenolpyruvate: step 2/7. Its pathway is metabolic intermediate biosynthesis; chorismate biosynthesis; chorismate from D-erythrose 4-phosphate and phosphoenolpyruvate: step 3/7. It functions in the pathway metabolic intermediate biosynthesis; chorismate biosynthesis; chorismate from D-erythrose 4-phosphate and phosphoenolpyruvate: step 4/7. The protein operates within metabolic intermediate biosynthesis; chorismate biosynthesis; chorismate from D-erythrose 4-phosphate and phosphoenolpyruvate: step 5/7. It participates in metabolic intermediate biosynthesis; chorismate biosynthesis; chorismate from D-erythrose 4-phosphate and phosphoenolpyruvate: step 6/7. The AROM polypeptide catalyzes 5 consecutive enzymatic reactions in prechorismate polyaromatic amino acid biosynthesis. The chain is Pentafunctional AROM polypeptide from Neosartorya fischeri (strain ATCC 1020 / DSM 3700 / CBS 544.65 / FGSC A1164 / JCM 1740 / NRRL 181 / WB 181) (Aspergillus fischerianus).